The primary structure comprises 190 residues: uncharacterized protein (190 aa).

The first 15 residues, methionine 1–glycine 15, serve as a signal peptide directing secretion.

It is found in the secreted. This is an uncharacterized protein from Arthroderma benhamiae (strain ATCC MYA-4681 / CBS 112371) (Trichophyton mentagrophytes).